The primary structure comprises 251 residues: Triosephosphate isomerase (251 aa).

9-11 (NWK) contacts substrate. Histidine 95 (electrophile) is an active-site residue. Glutamate 167 acts as the Proton acceptor in catalysis. Residues glycine 173, serine 213, and 234–235 (GG) contribute to the substrate site. Residue serine 213 is modified to Phosphoserine.

This sequence belongs to the triosephosphate isomerase family. Homodimer.

It localises to the cytoplasm. The enzyme catalyses D-glyceraldehyde 3-phosphate = dihydroxyacetone phosphate. The protein operates within carbohydrate biosynthesis; gluconeogenesis. Its pathway is carbohydrate degradation; glycolysis; D-glyceraldehyde 3-phosphate from glycerone phosphate: step 1/1. Functionally, involved in the gluconeogenesis. Catalyzes stereospecifically the conversion of dihydroxyacetone phosphate (DHAP) to D-glyceraldehyde-3-phosphate (G3P). This is Triosephosphate isomerase from Bacillus cereus (strain B4264).